The chain runs to 575 residues: Dihydroxy-acid dehydratase (575 aa).

Positions 1 to 25 (MPTTDSARAADIKQPDIKPRSRDVT) are disordered. Residues 8–25 (RAADIKQPDIKPRSRDVT) are compositionally biased toward basic and acidic residues. A [2Fe-2S] cluster-binding site is contributed by cysteine 64. Aspartate 96 contacts Mg(2+). Cysteine 137 contacts [2Fe-2S] cluster. Mg(2+) is bound by residues aspartate 138 and lysine 139. Residue lysine 139 is modified to N6-carboxylysine. Cysteine 214 provides a ligand contact to [2Fe-2S] cluster. Residue glutamate 465 coordinates Mg(2+). Serine 491 serves as the catalytic Proton acceptor.

It belongs to the IlvD/Edd family. As to quaternary structure, homodimer. The cofactor is [2Fe-2S] cluster. Mg(2+) serves as cofactor.

The catalysed reaction is (2R)-2,3-dihydroxy-3-methylbutanoate = 3-methyl-2-oxobutanoate + H2O. It carries out the reaction (2R,3R)-2,3-dihydroxy-3-methylpentanoate = (S)-3-methyl-2-oxopentanoate + H2O. Its pathway is amino-acid biosynthesis; L-isoleucine biosynthesis; L-isoleucine from 2-oxobutanoate: step 3/4. It functions in the pathway amino-acid biosynthesis; L-valine biosynthesis; L-valine from pyruvate: step 3/4. Functions in the biosynthesis of branched-chain amino acids. Catalyzes the dehydration of (2R,3R)-2,3-dihydroxy-3-methylpentanoate (2,3-dihydroxy-3-methylvalerate) into 2-oxo-3-methylpentanoate (2-oxo-3-methylvalerate) and of (2R)-2,3-dihydroxy-3-methylbutanoate (2,3-dihydroxyisovalerate) into 2-oxo-3-methylbutanoate (2-oxoisovalerate), the penultimate precursor to L-isoleucine and L-valine, respectively. The polypeptide is Dihydroxy-acid dehydratase (Mycolicibacterium paratuberculosis (strain ATCC BAA-968 / K-10) (Mycobacterium paratuberculosis)).